The primary structure comprises 105 residues: Large ribosomal subunit protein uL24 (105 aa).

This sequence belongs to the universal ribosomal protein uL24 family. As to quaternary structure, part of the 50S ribosomal subunit.

In terms of biological role, one of two assembly initiator proteins, it binds directly to the 5'-end of the 23S rRNA, where it nucleates assembly of the 50S subunit. Its function is as follows. One of the proteins that surrounds the polypeptide exit tunnel on the outside of the subunit. This is Large ribosomal subunit protein uL24 from Aromatoleum aromaticum (strain DSM 19018 / LMG 30748 / EbN1) (Azoarcus sp. (strain EbN1)).